The sequence spans 339 residues: Transcription initiation factor IIB (339 aa).

The TFIIB-type zinc-finger motif lies at 39–70; that stretch reads EELICPVCGSKNIIKDYERAEIVCEMCGCVLQ. Zn(2+)-binding residues include C43, C46, C62, and C65. A run of 2 repeats spans residues 156–239 and 250–331.

The protein belongs to the TFIIB family.

Its function is as follows. Stabilizes TBP binding to an archaeal box-A promoter. Also responsible for recruiting RNA polymerase II to the pre-initiation complex (DNA-TBP-TFIIB). This Methanococcus maripaludis (strain C6 / ATCC BAA-1332) protein is Transcription initiation factor IIB.